The following is a 262-amino-acid chain: Abhydrolase domain-containing protein ACTT2-1 (262 aa).

The Peroxisomal targeting signal type 1 motif lies at 260 to 262 (SKL).

The protein belongs to the AB hydrolase superfamily. AKT2 hydrolase family.

It is found in the peroxisome. The protein operates within mycotoxin biosynthesis. Functionally, abhydrolase domain-containing protein; part of the gene clusters that mediate the biosynthesis of the host-selective toxins (HSTs) ACT-toxins responsible for brown spot of tangerine disease by the tangerine pathotype which affects tangerines and mandarins. ACT-toxins consist of three moieties, 9,10-epoxy-8-hydroxy-9-methyl-decatrienoic acid (EDA), valine and a polyketide. ACT-toxin I is toxic to both citrus and pear; toxin II the 5''-deoxy derivative of ACT-toxin I, is highly toxic to pear and slightly toxic to citrus. On cellular level, ACT-toxins affect plasma membrane of susceptible cells and cause a sudden increase in loss of K(+) after a few minutes of toxin treatment. The acyl-CoA ligase ACTT1, the hydrolase ACTT2, the enoyl-CoA hydratases ACTT3 and ACTT6, and the acyl-CoA synthetase ACTT5 are all involved in the biosynthesis of the AK-, AF- and ACT-toxin common 9,10-epoxy-8-hydroxy-9-methyl-decatrienoic acid (EDA) structural moiety. The exact role of each enzyme, and of additional enzymes identified within the AF-toxin clusters have still to be determined. On the other hand, ACTTS1 to ACTTS4 are specific to the tangerine pathotype. The function of ACTTS3 is to elongate the polyketide chain portion of ACT-toxin that is unique to this toxin. The enoyl-reductase ACTTS2 might complement the missing enoyl-reductase (ER) domain in ACTTS3 in the synthesis of the polyketide portion of ACT-toxin. The roles of the nonribosomal peptide synthetases-related proteins ACTTS1 and ACTTS4 have also still not been elucidated. In Alternaria alternata (Alternaria rot fungus), this protein is Abhydrolase domain-containing protein ACTT2-1.